The primary structure comprises 238 residues: Leucine-rich repeat-containing protein 57 (238 aa).

8 LRR repeats span residues 10 to 36 (LETS…LQKL), 37 to 62 (TANL…SFQH), 64 to 82 (KSFT…DIGK), 83 to 106 (LKKL…IGQL), 108 to 128 (SLRT…GLGT), 129 to 152 (LRQL…VAEL), 154 to 173 (AIEI…EVSR), and 174 to 199 (TPRL…ILTD).

The polypeptide is Leucine-rich repeat-containing protein 57 (lrrc57) (Danio rerio (Zebrafish)).